The following is a 329-amino-acid chain: MTWRDEIARRVRGEHLRDAPLAPRTAVRVGGPADLLCRPADGDALSALLRAVRELGVPLSVLGGGANTLVADAGVRGVVLRLPQEFPGESTDGDTLVLSAGAPISRLPARAHAHGLVGMEFLGGIPGTLGGAAAMNAGTRLGEMKDVVTRLELATPDGTGFVPASALGYAYRTCRLPPGAVIARVEVRLHPGDVAASEALMREDRERRRATQPLYRPTFGSTFTNPPGEYAGRLVEAVGLKGHRVGNAIWSPVHANFVTNLGGATARDVLALVRLARARVQERFGIALETEVRLLGEFLEEDLEGLDGHAAAGGGPGAASGGVRPPEAT.

The 165-residue stretch at 28–192 (RVGGPADLLC…ARVEVRLHPG (165 aa)) folds into the FAD-binding PCMH-type domain. Residue R172 is part of the active site. S221 functions as the Proton donor in the catalytic mechanism. The active site involves E291. The segment at 307-329 (DGHAAAGGGPGAASGGVRPPEAT) is disordered. The span at 311–320 (AAGGGPGAAS) shows a compositional bias: gly residues.

This sequence belongs to the MurB family. Requires FAD as cofactor.

Its subcellular location is the cytoplasm. It catalyses the reaction UDP-N-acetyl-alpha-D-muramate + NADP(+) = UDP-N-acetyl-3-O-(1-carboxyvinyl)-alpha-D-glucosamine + NADPH + H(+). The protein operates within cell wall biogenesis; peptidoglycan biosynthesis. In terms of biological role, cell wall formation. The sequence is that of UDP-N-acetylenolpyruvoylglucosamine reductase from Anaeromyxobacter dehalogenans (strain 2CP-1 / ATCC BAA-258).